Consider the following 185-residue polypeptide: Elongation factor P (185 aa).

It belongs to the elongation factor P family.

It is found in the cytoplasm. It functions in the pathway protein biosynthesis; polypeptide chain elongation. Functionally, involved in peptide bond synthesis. Stimulates efficient translation and peptide-bond synthesis on native or reconstituted 70S ribosomes in vitro. Probably functions indirectly by altering the affinity of the ribosome for aminoacyl-tRNA, thus increasing their reactivity as acceptors for peptidyl transferase. In Staphylococcus carnosus (strain TM300), this protein is Elongation factor P.